We begin with the raw amino-acid sequence, 338 residues long: Lipoate-protein ligase A (338 aa).

A BPL/LPL catalytic domain is found at 29–216 (PATQRVLFLW…AFFAHYGERV (188 aa)). ATP-binding positions include arginine 71, 76–79 (GAVF), and lysine 134. Position 134 (lysine 134) interacts with (R)-lipoate.

This sequence belongs to the LplA family. Monomer.

The protein localises to the cytoplasm. It catalyses the reaction L-lysyl-[lipoyl-carrier protein] + (R)-lipoate + ATP = N(6)-[(R)-lipoyl]-L-lysyl-[lipoyl-carrier protein] + AMP + diphosphate + H(+). It functions in the pathway protein modification; protein lipoylation via exogenous pathway; protein N(6)-(lipoyl)lysine from lipoate: step 1/2. The protein operates within protein modification; protein lipoylation via exogenous pathway; protein N(6)-(lipoyl)lysine from lipoate: step 2/2. Catalyzes both the ATP-dependent activation of exogenously supplied lipoate to lipoyl-AMP and the transfer of the activated lipoyl onto the lipoyl domains of lipoate-dependent enzymes. In Salmonella paratyphi C (strain RKS4594), this protein is Lipoate-protein ligase A.